A 905-amino-acid chain; its full sequence is DNA gyrase subunit A (905 aa).

The Topo IIA-type catalytic domain occupies 35–524 (IPDVRDGLKP…GEFDQDIEDL (490 aa)). The O-(5'-phospho-DNA)-tyrosine intermediate role is filled by tyrosine 123. A GyrA-box motif is present at residues 551-557 (QKRGGKG).

The protein belongs to the type II topoisomerase GyrA/ParC subunit family. In terms of assembly, heterotetramer, composed of two GyrA and two GyrB chains. In the heterotetramer, GyrA contains the active site tyrosine that forms a transient covalent intermediate with DNA, while GyrB binds cofactors and catalyzes ATP hydrolysis.

It localises to the cytoplasm. It catalyses the reaction ATP-dependent breakage, passage and rejoining of double-stranded DNA.. A type II topoisomerase that negatively supercoils closed circular double-stranded (ds) DNA in an ATP-dependent manner to modulate DNA topology and maintain chromosomes in an underwound state. Negative supercoiling favors strand separation, and DNA replication, transcription, recombination and repair, all of which involve strand separation. Also able to catalyze the interconversion of other topological isomers of dsDNA rings, including catenanes and knotted rings. Type II topoisomerases break and join 2 DNA strands simultaneously in an ATP-dependent manner. The protein is DNA gyrase subunit A of Rickettsia typhi (strain ATCC VR-144 / Wilmington).